The sequence spans 37 residues: Bactericidin B-3 (37 aa).

At G37 the chain carries Glycine amide.

Belongs to the cecropin family.

The protein resides in the secreted. In terms of biological role, cecropins have lytic and antibacterial activity against several Gram-positive and Gram-negative bacteria. The protein is Bactericidin B-3 of Manduca sexta (Tobacco hawkmoth).